A 592-amino-acid polypeptide reads, in one-letter code: Potassium-transporting ATPase potassium-binding subunit (592 aa).

The next 11 membrane-spanning stretches (helical) occupy residues 7–27 (LQTV…GTFM), 71–91 (VLFN…QHLL), 136–156 (GLTV…IAVI), 179–199 (LYIL…QGVI), 287–307 (LEIL…GAMV), 314–334 (WTLL…LQGV), 411–431 (GLYT…LMIG), 449–469 (SVVT…IAMI), 473–493 (AVAA…YAFA), 515–535 (ILGA…VLAM), and 559–579 (FALW…FPAL).

Belongs to the KdpA family. In terms of assembly, the system is composed of three essential subunits: KdpA, KdpB and KdpC.

The protein localises to the cell inner membrane. Functionally, part of the high-affinity ATP-driven potassium transport (or Kdp) system, which catalyzes the hydrolysis of ATP coupled with the electrogenic transport of potassium into the cytoplasm. This subunit binds the periplasmic potassium ions and delivers the ions to the membrane domain of KdpB through an intramembrane tunnel. The sequence is that of Potassium-transporting ATPase potassium-binding subunit from Geobacter sulfurreducens (strain ATCC 51573 / DSM 12127 / PCA).